Here is a 1357-residue protein sequence, read N- to C-terminus: DNA-directed RNA polymerase subunit beta (1357 aa).

It belongs to the RNA polymerase beta chain family. As to quaternary structure, the RNAP catalytic core consists of 2 alpha, 1 beta, 1 beta' and 1 omega subunit. When a sigma factor is associated with the core the holoenzyme is formed, which can initiate transcription.

The catalysed reaction is RNA(n) + a ribonucleoside 5'-triphosphate = RNA(n+1) + diphosphate. Functionally, DNA-dependent RNA polymerase catalyzes the transcription of DNA into RNA using the four ribonucleoside triphosphates as substrates. In Acinetobacter baumannii (strain ATCC 17978 / DSM 105126 / CIP 53.77 / LMG 1025 / NCDC KC755 / 5377), this protein is DNA-directed RNA polymerase subunit beta.